Here is a 280-residue protein sequence, read N- to C-terminus: Inner membrane ABC transporter permease protein YcjP (280 aa).

Residues 1–10 lie on the Cytoplasmic side of the membrane; that stretch reads MATNKRTLSR. A helical membrane pass occupies residues 11-31; sequence IGFYCGLALFLIITLFPFFVM. Residues 32 to 53 lie on the Periplasmic side of the membrane; that stretch reads LMTSFKGAKEAISLHPTLLPQQ. A helical transmembrane segment spans residues 54–74; sequence WTLEHYVDIFNPMIFPFVDYF. Residues 74–265 form the ABC transmembrane type-1 domain; that stretch reads FRNSLVVSVV…LPVVIMYALS (192 aa). Residues 75 to 77 are Cytoplasmic-facing; that stretch reads RNS. Residues 78–98 form a helical membrane-spanning segment; the sequence is LVVSVVSSVVAVFLGILGAYA. Topologically, residues 99–117 are periplasmic; the sequence is LSRLRFKGRMTINASFYTV. The helical transmembrane segment at 118 to 138 threads the bilayer; that stretch reads YMFSGILLVVPLFKIITALGI. The Cytoplasmic portion of the chain corresponds to 139 to 140; that stretch reads YD. A helical membrane pass occupies residues 141–161; it reads TEMALIITMVTQTLPTAVFML. The Periplasmic portion of the chain corresponds to 162–189; that stretch reads KSYFDTIPDEIEEAAMMDGLNRLQIIFR. Residues 190 to 210 form a helical membrane-spanning segment; it reads ITVPLAMSGLISVFVYCFMVA. Over 211-214 the chain is Cytoplasmic; that stretch reads WNDY. The helical transmembrane segment at 215-235 threads the bilayer; that stretch reads LFASIFLSSASNFTLPVGLNA. At 236-242 the chain is on the periplasmic side; it reads LFSTPDY. A helical membrane pass occupies residues 243-263; the sequence is IWGRMMAASLVTALPVVIMYA. The Cytoplasmic portion of the chain corresponds to 264–280; that stretch reads LSERFIKSGLTAGGVKG.

The protein belongs to the binding-protein-dependent transport system permease family. MalFG subfamily.

The protein resides in the cell inner membrane. In terms of biological role, probably part of the binding-protein-dependent transport system YcjNOP. Probably responsible for the translocation of the substrate across the membrane. The polypeptide is Inner membrane ABC transporter permease protein YcjP (ycjP) (Escherichia coli (strain K12)).